We begin with the raw amino-acid sequence, 325 residues long: Beta-ketoacyl-[acyl-carrier-protein] synthase III (325 aa).

Active-site residues include cysteine 119 and histidine 252. The interval 253 to 257 (QANIR) is ACP-binding. The active site involves asparagine 282.

The protein belongs to the thiolase-like superfamily. FabH family. In terms of assembly, homodimer.

The protein resides in the cytoplasm. It carries out the reaction malonyl-[ACP] + acetyl-CoA + H(+) = 3-oxobutanoyl-[ACP] + CO2 + CoA. The protein operates within lipid metabolism; fatty acid biosynthesis. Functionally, catalyzes the condensation reaction of fatty acid synthesis by the addition to an acyl acceptor of two carbons from malonyl-ACP. Catalyzes the first condensation reaction which initiates fatty acid synthesis and may therefore play a role in governing the total rate of fatty acid production. Possesses both acetoacetyl-ACP synthase and acetyl transacylase activities. Its substrate specificity determines the biosynthesis of branched-chain and/or straight-chain of fatty acids. This Acidovorax ebreus (strain TPSY) (Diaphorobacter sp. (strain TPSY)) protein is Beta-ketoacyl-[acyl-carrier-protein] synthase III.